We begin with the raw amino-acid sequence, 259 residues long: tRNA pseudouridine synthase A (259 aa).

Aspartate 52 acts as the Nucleophile in catalysis. Residue tyrosine 113 participates in substrate binding.

The protein belongs to the tRNA pseudouridine synthase TruA family. As to quaternary structure, homodimer.

The enzyme catalyses uridine(38/39/40) in tRNA = pseudouridine(38/39/40) in tRNA. Formation of pseudouridine at positions 38, 39 and 40 in the anticodon stem and loop of transfer RNAs. This chain is tRNA pseudouridine synthase A, found in Allorhizobium ampelinum (strain ATCC BAA-846 / DSM 112012 / S4) (Agrobacterium vitis (strain S4)).